The sequence spans 54 residues: MSGTGVLLLTLLLLVTMATSDDACSLLNGDDCGPGELCCTPSGDHQGTCETSCW.

An N-terminal signal peptide occupies residues 1–19 (MSGTGVLLLTLLLLVTMAT). 3 cysteine pairs are disulfide-bonded: Cys24–Cys39, Cys32–Cys49, and Cys38–Cys53.

As to expression, expressed by the venom duct.

The protein resides in the secreted. Its function is as follows. Probable neurotoxin. This chain is Conotoxin Cal6.17, found in Californiconus californicus (California cone).